Reading from the N-terminus, the 668-residue chain is DNA ligase (668 aa).

NAD(+)-binding positions include 31 to 35 (DAEYD), 80 to 81 (SL), and Glu-112. Catalysis depends on Lys-114, which acts as the N6-AMP-lysine intermediate. NAD(+) is bound by residues Arg-135, Glu-172, Lys-289, and Lys-313. Positions 407, 410, 425, and 431 each coordinate Zn(2+). The BRCT domain maps to 591 to 668 (SVPQPLAGKV…NEEQLIELLN (78 aa)).

It belongs to the NAD-dependent DNA ligase family. LigA subfamily. Requires Mg(2+) as cofactor. It depends on Mn(2+) as a cofactor.

It carries out the reaction NAD(+) + (deoxyribonucleotide)n-3'-hydroxyl + 5'-phospho-(deoxyribonucleotide)m = (deoxyribonucleotide)n+m + AMP + beta-nicotinamide D-nucleotide.. In terms of biological role, DNA ligase that catalyzes the formation of phosphodiester linkages between 5'-phosphoryl and 3'-hydroxyl groups in double-stranded DNA using NAD as a coenzyme and as the energy source for the reaction. It is essential for DNA replication and repair of damaged DNA. In Aliivibrio fischeri (strain MJ11) (Vibrio fischeri), this protein is DNA ligase.